The sequence spans 151 residues: 3-hydroxyacyl-[acyl-carrier-protein] dehydratase FabZ (151 aa).

The active site involves His-54.

It belongs to the thioester dehydratase family. FabZ subfamily.

The protein resides in the cytoplasm. The enzyme catalyses a (3R)-hydroxyacyl-[ACP] = a (2E)-enoyl-[ACP] + H2O. Involved in unsaturated fatty acids biosynthesis. Catalyzes the dehydration of short chain beta-hydroxyacyl-ACPs and long chain saturated and unsaturated beta-hydroxyacyl-ACPs. The protein is 3-hydroxyacyl-[acyl-carrier-protein] dehydratase FabZ of Erwinia tasmaniensis (strain DSM 17950 / CFBP 7177 / CIP 109463 / NCPPB 4357 / Et1/99).